The chain runs to 482 residues: Kynurenine 3-monooxygenase (482 aa).

This sequence belongs to the aromatic-ring hydroxylase family. KMO subfamily. It depends on FAD as a cofactor.

Its subcellular location is the mitochondrion outer membrane. The enzyme catalyses L-kynurenine + NADPH + O2 + H(+) = 3-hydroxy-L-kynurenine + NADP(+) + H2O. It participates in cofactor biosynthesis; NAD(+) biosynthesis; quinolinate from L-kynurenine: step 1/3. Catalyzes the hydroxylation of L-kynurenine (L-Kyn) to form 3-hydroxy-L-kynurenine (L-3OHKyn). Required for synthesis of quinolinic acid. The protein is Kynurenine 3-monooxygenase of Phaeosphaeria nodorum (strain SN15 / ATCC MYA-4574 / FGSC 10173) (Glume blotch fungus).